Consider the following 190-residue polypeptide: uncharacterized protein (190 aa).

2 disordered regions span residues 1-21 (MALRGHPEPQPTNTPLSATVG) and 155-190 (PEMGQNESLSEERKGHESKRKSGGRGSPSSHPTQAS). The span at 181–190 (SPSSHPTQAS) shows a compositional bias: low complexity.

This is an uncharacterized protein from Homo sapiens (Human).